Reading from the N-terminus, the 1241-residue chain is DNA-directed RNA polymerase subunit beta (1241 aa).

Belongs to the RNA polymerase beta chain family. The RNAP catalytic core consists of 2 alpha, 1 beta, 1 beta' and 1 omega subunit. When a sigma factor is associated with the core the holoenzyme is formed, which can initiate transcription.

The enzyme catalyses RNA(n) + a ribonucleoside 5'-triphosphate = RNA(n+1) + diphosphate. DNA-dependent RNA polymerase catalyzes the transcription of DNA into RNA using the four ribonucleoside triphosphates as substrates. This chain is DNA-directed RNA polymerase subunit beta, found in Clostridium botulinum (strain Alaska E43 / Type E3).